Consider the following 608-residue polypeptide: tRNA (guanine(37)-N(1))-methyltransferase 1 (608 aa).

Positions 207–229 are disordered; the sequence is SRPKKKKRRKEEERSEGKKRTGK. A compositionally biased stretch (basic and acidic residues) spans 216 to 229; it reads KEEERSEGKKRTGK. Residues arginine 425, 463–464, 491–492, and asparagine 514 each bind S-adenosyl-L-methionine; these read DL and DG.

Belongs to the class I-like SAM-binding methyltransferase superfamily. TRM5/TYW2 family. As to quaternary structure, monomer.

The protein localises to the mitochondrion matrix. It is found in the nucleus. The protein resides in the cytoplasm. It catalyses the reaction guanosine(37) in tRNA + S-adenosyl-L-methionine = N(1)-methylguanosine(37) in tRNA + S-adenosyl-L-homocysteine + H(+). Functionally, specifically methylates the N1 position of guanosine-37 in various cytoplasmic and mitochondrial tRNAs. Methylation is not dependent on the nature of the nucleoside 5' of the target nucleoside. This is the first step in the biosynthesis of wybutosine (yW), a modified base adjacent to the anticodon of tRNAs and required for accurate decoding. The sequence is that of tRNA (guanine(37)-N(1))-methyltransferase 1 from Vitis vinifera (Grape).